A 146-amino-acid chain; its full sequence is Protein beta (146 aa).

The polypeptide is Protein beta (Adelaide River virus (ARV)).